Here is a 440-residue protein sequence, read N- to C-terminus: MTTTDPFDVLDPTAPVYTVTGGDWQDIVSDIADRHPDRIVVNMGPQHPSTHGVLRLVLELEGETVTQARVVVGYLHTGIEKNCEYRTYTQAVTFLTRADYLSPLFTETAYCLAVEKLLGITDQIPERANVIRVMMMELNRIASHLVWLATGGMEIGALSAMLYGFREREMILDIFEMITGLRMNHAYIRPGGVIQDLPPGAVEKIREFLDIMPARIDEYHDLLTGQPIWVRRLKGVGYLDLTGAVALGATGPIMRAAGYPWDLRKVAPYCGYETYDFEVPTQTDGDCFARYLVRMDEMRESLKIIEQCLDRLRPGPVMVEDKKIAWPAKLALGPDGMGNSLDHIRHIMATSMEALIHHFKLVTEGFHVPPGQVYVPVESPRGELGVHLVSDGGTKPYRVHLREPSFVNLQTVAAVCEGGMVADVIAAVASIDPVMGGCDR.

This sequence belongs to the complex I 49 kDa subunit family. In terms of assembly, NDH-1 is composed of 14 different subunits. Subunits NuoB, C, D, E, F, and G constitute the peripheral sector of the complex.

Its subcellular location is the cell membrane. It carries out the reaction a quinone + NADH + 5 H(+)(in) = a quinol + NAD(+) + 4 H(+)(out). In terms of biological role, NDH-1 shuttles electrons from NADH, via FMN and iron-sulfur (Fe-S) centers, to quinones in the respiratory chain. The immediate electron acceptor for the enzyme in this species is believed to be a menaquinone. Couples the redox reaction to proton translocation (for every two electrons transferred, four hydrogen ions are translocated across the cytoplasmic membrane), and thus conserves the redox energy in a proton gradient. In Acidothermus cellulolyticus (strain ATCC 43068 / DSM 8971 / 11B), this protein is NADH-quinone oxidoreductase subunit D.